Consider the following 313-residue polypeptide: MEGKNLTSISEFFLLGFSEQLEEQKALFGSFLFMYLVMVAGNLLIILVIITDTQLHTPMYFFLANLSLADACFVSTTVPKMLANIQIQSQAISYSGCLLQLYFFMLFVMLEAFLLAVMAYDHYVAICHPLHYILIMSPGLCVFLVSASWIMNALYSLLHTLLMNSLSFCANHEIPHFFCDIDPLLSLSCADPFTNELVIFITGGLTGLICVLCLIISYTNVFSTILKIPSAQGKRKAFSTCSSHLSVVSLFXGTSFCVYFSPPSTRXAQKDTVASVMYTVVTPMLNPFIYSLRNQEIKSSLRKLIWVRKIHSP.

The Extracellular segment spans residues 1–25 (MEGKNLTSISEFFLLGFSEQLEEQK). The N-linked (GlcNAc...) asparagine glycan is linked to asparagine 5. The helical transmembrane segment at 26–49 (ALFGSFLFMYLVMVAGNLLIILVI) threads the bilayer. Topologically, residues 50-57 (ITDTQLHT) are cytoplasmic. Residues 58-79 (PMYFFLANLSLADACFVSTTVP) traverse the membrane as a helical segment. Over 80–100 (KMLANIQIQSQAISYSGCLLQ) the chain is Extracellular. An intrachain disulfide couples cysteine 97 to cysteine 189. A helical membrane pass occupies residues 101-120 (LYFFMLFVMLEAFLLAVMAY). Residues 121–140 (DHYVAICHPLHYILIMSPGL) are Cytoplasmic-facing. The helical transmembrane segment at 141-158 (CVFLVSASWIMNALYSLL) threads the bilayer. Over 159–196 (HTLLMNSLSFCANHEIPHFFCDIDPLLSLSCADPFTNE) the chain is Extracellular. The chain crosses the membrane as a helical span at residues 197–219 (LVIFITGGLTGLICVLCLIISYT). Residues 220 to 236 (NVFSTILKIPSAQGKRK) are Cytoplasmic-facing. The chain crosses the membrane as a helical span at residues 237-259 (AFSTCSSHLSVVSLFXGTSFCVY). The Extracellular segment spans residues 260 to 272 (FSPPSTRXAQKDT). A helical membrane pass occupies residues 273–292 (VASVMYTVVTPMLNPFIYSL). The Cytoplasmic portion of the chain corresponds to 293-313 (RNQEIKSSLRKLIWVRKIHSP).

This sequence belongs to the G-protein coupled receptor 1 family.

The protein resides in the cell membrane. Its function is as follows. Odorant receptor. This chain is Olfactory receptor 1G1 (OR1G1), found in Pan troglodytes (Chimpanzee).